Reading from the N-terminus, the 64-residue chain is Conotoxin Ts-011 (64 aa).

Residues 1-22 (MHCLPVPVILLLLIASTPSVDA) form the signal peptide. Residues 23 to 51 (RPKTKDDVPPASFHGADNANRILRTLWNL) constitute a propeptide that is removed on maturation. Isoleucine 63 carries the isoleucine amide modification.

Belongs to the conotoxin T superfamily. Contains 2 disulfide bonds that can be either 'C1-C3, C2-C4' or 'C1-C4, C2-C3', since these disulfide connectivities have been observed for conotoxins with cysteine framework V (for examples, see AC P0DQQ7 and AC P81755). Expressed by the venom duct.

It localises to the secreted. This is Conotoxin Ts-011 from Conus tessulatus (Tessellate cone).